The chain runs to 101 residues: Urease subunit beta (101 aa).

It belongs to the urease beta subunit family. In terms of assembly, heterotrimer of UreA (gamma), UreB (beta) and UreC (alpha) subunits. Three heterotrimers associate to form the active enzyme.

It is found in the cytoplasm. It catalyses the reaction urea + 2 H2O + H(+) = hydrogencarbonate + 2 NH4(+). It participates in nitrogen metabolism; urea degradation; CO(2) and NH(3) from urea (urease route): step 1/1. In Ectopseudomonas mendocina (strain ymp) (Pseudomonas mendocina), this protein is Urease subunit beta.